A 643-amino-acid polypeptide reads, in one-letter code: Phosphomethylpyrimidine synthase (643 aa).

Residues N248, M277, Y306, H342, 362–364 (SRG), 403–406 (DGLR), and E442 each bind substrate. Position 446 (H446) interacts with Zn(2+). Y469 contributes to the substrate binding site. H510 provides a ligand contact to Zn(2+). Positions 590, 593, and 598 each coordinate [4Fe-4S] cluster.

The protein belongs to the ThiC family. Homodimer. Requires [4Fe-4S] cluster as cofactor.

It carries out the reaction 5-amino-1-(5-phospho-beta-D-ribosyl)imidazole + S-adenosyl-L-methionine = 4-amino-2-methyl-5-(phosphooxymethyl)pyrimidine + CO + 5'-deoxyadenosine + formate + L-methionine + 3 H(+). It participates in cofactor biosynthesis; thiamine diphosphate biosynthesis. In terms of biological role, catalyzes the synthesis of the hydroxymethylpyrimidine phosphate (HMP-P) moiety of thiamine from aminoimidazole ribotide (AIR) in a radical S-adenosyl-L-methionine (SAM)-dependent reaction. This is Phosphomethylpyrimidine synthase from Burkholderia cenocepacia (strain HI2424).